Reading from the N-terminus, the 467-residue chain is MVVEEENRSMEEGLLQHQNDRDDRRITACVILSTFVAVCSAFSYGCAAGYTSGAETAIMKELDLSMAQFSAFGSFLNVGGAVGALFSGQLAVILGRRRTLWACDFFCVFGWLSIAFAKNVFWLDLGRISLGIGVGLISYVVPVYIAEITPKHVRGAFTASNQLLQNSGVSLIYFFGTVINWRVMAVIGAIPCILQTIGIFFIPESPRWLAKIRLSKEVESSLHRLRGKDTDVSGEAAEIQVMTKMLEEDSKSSFSDMFQKKYRRTLVVGIGLMLIQQLSGASGITYYSNAIFRKAGFSERLGSMIFGVFVIPKALVGLILVDRWGRRPLLLASAVGMSIGSLLIGVSFTLQQMNVLPELIPIFVFVNILVYFGCFAFGIGGLPWVIMSEIFPINIKVSAGTIVALTSWTSGWFVSYAFNFMFEWSAQGTFYIFAAVGGMSFIFIWMLVPETKGQSLEELQASLTGTS.

12 helical membrane-spanning segments follow: residues 26–46 (ITACVILSTFVAVCSAFSYGC), 75–95 (FLNVGGAVGALFSGQLAVILG), 105–125 (FFCVFGWLSIAFAKNVFWLDL), 128–148 (ISLGIGVGLISYVVPVYIAEI), 155–177 (GAFTASNQLLQNSGVSLIYFFGT), 183–203 (VMAVIGAIPCILQTIGIFFIP), 266–286 (LVVGIGLMLIQQLSGASGITY), 301–321 (LGSMIFGVFVIPKALVGLILV), 328–348 (PLLLASAVGMSIGSLLIGVSF), 359–379 (LIPIFVFVNILVYFGCFAFGI), 402–422 (IVALTSWTSGWFVSYAFNFMF), and 428–448 (GTFYIFAAVGGMSFIFIWMLV).

It belongs to the major facilitator superfamily. Sugar transporter (TC 2.A.1.1) family.

The protein resides in the membrane. Sugar transporter. The polypeptide is Sugar transporter ERD6-like 11 (Arabidopsis thaliana (Mouse-ear cress)).